A 126-amino-acid polypeptide reads, in one-letter code: Acyl carrier protein 2, mitochondrial (126 aa).

A mitochondrion-targeting transit peptide spans 1–36; sequence MAARGAMLRYLRVNVNPTIQNPRECVLPFSILLRRF. Positions 48–123 constitute a Carrier domain; that stretch reads SEVTDRVLSV…LAVDFIASHP (76 aa). An O-(pantetheine 4'-phosphoryl)serine modification is found at Ser83.

It belongs to the acyl carrier protein (ACP) family. As to quaternary structure, complex I is composed of at least 49 different subunits. 4'-phosphopantetheine is transferred from CoA to a specific serine of the apo-ACP-like protein.

The protein localises to the mitochondrion. It functions in the pathway lipid metabolism; fatty acid biosynthesis. In terms of biological role, carrier of the growing fatty acid chain in fatty acid biosynthesis. May be involved in the synthesis of short and medium chain fatty acids. Accessory and non-catalytic subunit of the mitochondrial membrane respiratory chain NADH dehydrogenase (Complex I), which functions in the transfer of electrons from NADH to the respiratory chain. The chain is Acyl carrier protein 2, mitochondrial (MTACP2) from Arabidopsis thaliana (Mouse-ear cress).